The following is a 217-amino-acid chain: tRNA (guanine-N(7)-)-methyltransferase (217 aa).

Residues glutamate 44, glutamate 69, aspartate 96, and aspartate 118 each contribute to the S-adenosyl-L-methionine site. Residue aspartate 118 is part of the active site. Substrate is bound by residues lysine 122, aspartate 154, and 191–194 (TEYE).

It belongs to the class I-like SAM-binding methyltransferase superfamily. TrmB family.

The catalysed reaction is guanosine(46) in tRNA + S-adenosyl-L-methionine = N(7)-methylguanosine(46) in tRNA + S-adenosyl-L-homocysteine. The protein operates within tRNA modification; N(7)-methylguanine-tRNA biosynthesis. In terms of biological role, catalyzes the formation of N(7)-methylguanine at position 46 (m7G46) in tRNA. In Bacillus thuringiensis (strain Al Hakam), this protein is tRNA (guanine-N(7)-)-methyltransferase.